The sequence spans 964 residues: uncharacterized protein (964 aa).

Disordered stretches follow at residues 1–31 (MDSETDTDTHSICNSVSSGENYKSPESSDCE) and 169–199 (EETYSEEDERQTPIQMENATSEVSSSEDEIS). Over residues 10–27 (HSICNSVSSGENYKSPES) the composition is skewed to polar residues. A coiled-coil region spans residues 656–840 (EVMESLQVEI…LILNQTSMAK (185 aa)).

This is an uncharacterized protein from Caenorhabditis elegans.